We begin with the raw amino-acid sequence, 98 residues long: ESAT-6-like protein EsxW (98 aa).

It belongs to the WXG100 family. CFP-10 subfamily. As to quaternary structure, forms a tight 1:1 complex with EsxV. The complex is destabilized at low pH. Unfolding of the proteins is required for dissociation of the complex and membrane binding.

It localises to the secreted. This Mycobacterium tuberculosis (strain ATCC 25618 / H37Rv) protein is ESAT-6-like protein EsxW.